Consider the following 425-residue polypeptide: Serine--tRNA ligase (425 aa).

Residue 231–233 coordinates L-serine; it reads TAE. 262–264 contacts ATP; sequence RSE. Residue Glu-285 coordinates L-serine. Residue 349–352 coordinates ATP; the sequence is EISS. Ser-385 serves as a coordination point for L-serine.

This sequence belongs to the class-II aminoacyl-tRNA synthetase family. Type-1 seryl-tRNA synthetase subfamily. In terms of assembly, homodimer. The tRNA molecule binds across the dimer.

It localises to the cytoplasm. It carries out the reaction tRNA(Ser) + L-serine + ATP = L-seryl-tRNA(Ser) + AMP + diphosphate + H(+). The catalysed reaction is tRNA(Sec) + L-serine + ATP = L-seryl-tRNA(Sec) + AMP + diphosphate + H(+). Its pathway is aminoacyl-tRNA biosynthesis; selenocysteinyl-tRNA(Sec) biosynthesis; L-seryl-tRNA(Sec) from L-serine and tRNA(Sec): step 1/1. Functionally, catalyzes the attachment of serine to tRNA(Ser). Is also able to aminoacylate tRNA(Sec) with serine, to form the misacylated tRNA L-seryl-tRNA(Sec), which will be further converted into selenocysteinyl-tRNA(Sec). This Halalkalibacterium halodurans (strain ATCC BAA-125 / DSM 18197 / FERM 7344 / JCM 9153 / C-125) (Bacillus halodurans) protein is Serine--tRNA ligase.